The chain runs to 684 residues: Poly(A) RNA polymerase cid14 (684 aa).

Disordered regions lie at residues methionine 1–aspartate 52, aspartate 64–glutamate 127, and tryptophan 161–glutamate 219. Composition is skewed to basic and acidic residues over residues glutamate 19–serine 35, glycine 73–glycine 91, aspartate 108–glutamate 127, serine 171–lysine 186, and phenylalanine 199–asparagine 210. Positions 298 and 300 each coordinate Mg(2+). The ATP site is built by glycine 364, lysine 389, serine 407, tyrosine 408, asparagine 492, and lysine 496. The region spanning asparagine 434–asparagine 492 is the PAP-associated domain. A disordered region spans residues glycine 623 to phenylalanine 684. Polar residues predominate over residues glutamine 628–serine 655. The segment covering aspartate 656–aspartate 672 has biased composition (acidic residues).

This sequence belongs to the DNA polymerase type-B-like family. Heterooligomer. Component of the TRAMP complex composed of at least cid14, mtr4, and air1. Mg(2+) is required as a cofactor. Mn(2+) serves as cofactor.

The protein resides in the nucleus. It is found in the nucleolus. The catalysed reaction is RNA(n) + ATP = RNA(n)-3'-adenine ribonucleotide + diphosphate. In terms of biological role, required for 3' polyadenylation of the 5.8S and 25S rRNAs as a prelude to their degradation in the exosome. Involved in the nucleolar organization to ensure faithful chromosome segregation during mitosis. This Schizosaccharomyces pombe (strain 972 / ATCC 24843) (Fission yeast) protein is Poly(A) RNA polymerase cid14 (cid14).